We begin with the raw amino-acid sequence, 153 residues long: UPF0260 protein YcgN (153 aa).

The protein belongs to the UPF0260 family.

The protein is UPF0260 protein YcgN of Salmonella dublin (strain CT_02021853).